Here is a 464-residue protein sequence, read N- to C-terminus: Interstitial collagenase A (464 aa).

A signal peptide spans 1–17 (MPSLPLLLLLWAASSYS). A propeptide spans 18 to 96 (FPVFHNGDRQ…PRCGVPDVAP (79 aa)) (activation peptide). The short motif at 87-94 (PRCGVPDV) is the Cysteine switch element. Cysteine 89 lines the Zn(2+) pocket. Positions 95 to 274 (APYAITHNNP…IQPTGATTPH (180 aa)) are metalloprotease. Ca(2+) is bound at residue aspartate 155. Zn(2+)-binding residues include histidine 165 and aspartate 167. The Ca(2+) site is built by aspartate 172 and glycine 173. A Zn(2+)-binding site is contributed by histidine 180. Residues glycine 187, glycine 189, and aspartate 191 each coordinate Ca(2+). Residue histidine 193 participates in Zn(2+) binding. Aspartate 195 and glutamate 198 together coordinate Ca(2+). The N-linked (GlcNAc...) asparagine glycan is linked to asparagine 202. Histidine 215 lines the Zn(2+) pocket. Glutamate 216 is a catalytic residue. 2 residues coordinate Zn(2+): histidine 219 and histidine 225. Hemopexin repeat units lie at residues 273–322 (PHPC…WPNL) and 323–369 (PVKL…FGFP). Cysteines 276 and 464 form a disulfide. Aspartate 283 contributes to the Ca(2+) binding site. N-linked (GlcNAc...) asparagine glycosylation occurs at asparagine 371. Hemopexin repeat units lie at residues 372–420 (VTHI…FPGI) and 421–464 (DDKV…WFNC). Residues aspartate 376 and aspartate 425 each coordinate Ca(2+).

This sequence belongs to the peptidase M10A family. Requires Ca(2+) as cofactor. It depends on Zn(2+) as a cofactor.

It is found in the secreted. The protein localises to the extracellular space. The protein resides in the extracellular matrix. The enzyme catalyses Cleavage of the triple helix of collagen at about three-quarters of the length of the molecule from the N-terminus, at 775-Gly-|-Ile-776 in the alpha1(I) chain. Cleaves synthetic substrates and alpha-macroglobulins at bonds where P1' is a hydrophobic residue.. Can be activated without removal of the activation peptide. Cleaves collagens of types I, II, and III at one site in the helical domain. Also cleaves collagens of types VII and X. Able to degrade synthetic peptides and type I and II fibrillar collagen. This chain is Interstitial collagenase A (Mmp1a), found in Mus musculus (Mouse).